The chain runs to 83 residues: Putative snRNP Sm-like protein (83 aa).

A Sm domain is found at 9-81; that stretch reads KPMDVLKNAL…VIFVSPSKGD (73 aa).

This sequence belongs to the snRNP Sm proteins family.

The protein is Putative snRNP Sm-like protein of Thermoplasma volcanium (strain ATCC 51530 / DSM 4299 / JCM 9571 / NBRC 15438 / GSS1).